A 242-amino-acid polypeptide reads, in one-letter code: uncharacterized protein (242 aa).

Belongs to the MtxX family.

This is an uncharacterized protein from Methanothermobacter thermautotrophicus (strain ATCC 29096 / DSM 1053 / JCM 10044 / NBRC 100330 / Delta H) (Methanobacterium thermoautotrophicum).